Reading from the N-terminus, the 485-residue chain is Sulfated surface glycoprotein 185 (485 aa).

The signal sequence occupies residues 1–20 (MSKLLLVALFGAIAVVATSA). The N-linked (GlcNAc...) asparagine glycan is linked to Asn-193. Residues 212–317 (LSGPNVNPIG…PPVPPPPSPP (106 aa)) are disordered. Pro residues-rich tracts occupy residues 221 to 234 (GPAP…PSPQ) and 241 to 317 (PPSP…PSPP). The N-linked (GlcNAc...) asparagine glycan is linked to Asn-347.

Polymer. In terms of processing, intersubunit cross-links are formed between saccharide chains rather than between polypeptide chains. Hydroxylated on proline residues in the Pro-rich central domain. Post-translationally, glycosylated; contains sulfate-substituted glycans.

Functionally, the extracellular matrix (ECM) of Volvox contains insoluble fibrous layers that surround individual cells at a distance to form contiguous cellular compartments. SSG 185 is the monomeric precursor of this substructure (C3Z structure). This chain is Sulfated surface glycoprotein 185, found in Volvox carteri (Green alga).